Here is a 478-residue protein sequence, read N- to C-terminus: MTKKEERDAKLPPKSNFSEWYHELLRSAEIVDVRYPVKGMSVWYPFGFALRSHVYQIIKELLDVDHYETQFPLLIPETEFMKEAEHIKGFEDEVYWVTHGGRDPLDIKLALRPTSETAIYPMLKLWIRSHADLPLRIYQIVNTFRYETKHTRPLIRLREITSFKEAHTAHATWEEAAMQVEIAIQRYIEFYRRLAIPCLVSKRPSWDKFPGADYSIALDVIMPDGRTLQVGTAHLLGTNFAKTYEITYEDEHGEQRYVNQTCYGISERCIAALIAVHGDDKGLVLPWRVAPVQVVIVPIIFGEREPIIEVCRSIASTLAGRNIRVRLDDGDERPGAKFYKWEMRGVPVRIEIGPRDIKNGVVTIVRRDGVRKTLPMDERLVDAILIEAEELQTVLYNRAKEFMDSKIKLVSSLDEARSQVQSGVARVPWCGSVECGHALEDQIGANLLGEPRGDELPPMRCLVCGRESTGSTYMARQY.

It belongs to the class-II aminoacyl-tRNA synthetase family. ProS type 3 subfamily. Homodimer.

Its subcellular location is the cytoplasm. The catalysed reaction is tRNA(Pro) + L-proline + ATP = L-prolyl-tRNA(Pro) + AMP + diphosphate. Its function is as follows. Catalyzes the attachment of proline to tRNA(Pro) in a two-step reaction: proline is first activated by ATP to form Pro-AMP and then transferred to the acceptor end of tRNA(Pro). The polypeptide is Proline--tRNA ligase (Methanothrix thermoacetophila (strain DSM 6194 / JCM 14653 / NBRC 101360 / PT) (Methanosaeta thermophila)).